We begin with the raw amino-acid sequence, 426 residues long: Enolase (426 aa).

(2R)-2-phosphoglycerate is bound at residue Gln165. Glu209 functions as the Proton donor in the catalytic mechanism. Residues Asp244, Glu287, and Asp313 each coordinate Mg(2+). Lys338, Arg367, Ser368, and Lys389 together coordinate (2R)-2-phosphoglycerate. Residue Lys338 is the Proton acceptor of the active site.

It belongs to the enolase family. Mg(2+) is required as a cofactor.

The protein resides in the cytoplasm. It localises to the secreted. It is found in the cell surface. The catalysed reaction is (2R)-2-phosphoglycerate = phosphoenolpyruvate + H2O. It participates in carbohydrate degradation; glycolysis; pyruvate from D-glyceraldehyde 3-phosphate: step 4/5. Functionally, catalyzes the reversible conversion of 2-phosphoglycerate (2-PG) into phosphoenolpyruvate (PEP). It is essential for the degradation of carbohydrates via glycolysis. The sequence is that of Enolase from Methanococcus maripaludis (strain C5 / ATCC BAA-1333).